Here is a 472-residue protein sequence, read N- to C-terminus: 3-isopropylmalate dehydratase large subunit (472 aa).

Residues Cys347, Cys407, and Cys410 each contribute to the [4Fe-4S] cluster site.

Belongs to the aconitase/IPM isomerase family. LeuC type 1 subfamily. As to quaternary structure, heterodimer of LeuC and LeuD. Requires [4Fe-4S] cluster as cofactor.

The catalysed reaction is (2R,3S)-3-isopropylmalate = (2S)-2-isopropylmalate. The protein operates within amino-acid biosynthesis; L-leucine biosynthesis; L-leucine from 3-methyl-2-oxobutanoate: step 2/4. Functionally, catalyzes the isomerization between 2-isopropylmalate and 3-isopropylmalate, via the formation of 2-isopropylmaleate. The sequence is that of 3-isopropylmalate dehydratase large subunit from Parasynechococcus marenigrum (strain WH8102).